A 239-amino-acid polypeptide reads, in one-letter code: tRNA (guanine-N(1)-)-methyltransferase (239 aa).

S-adenosyl-L-methionine contacts are provided by residues Gly-110 and 130 to 135 (IGDYVL).

This sequence belongs to the RNA methyltransferase TrmD family. Homodimer.

The protein localises to the cytoplasm. The catalysed reaction is guanosine(37) in tRNA + S-adenosyl-L-methionine = N(1)-methylguanosine(37) in tRNA + S-adenosyl-L-homocysteine + H(+). Its function is as follows. Specifically methylates guanosine-37 in various tRNAs. This Borrelia garinii subsp. bavariensis (strain ATCC BAA-2496 / DSM 23469 / PBi) (Borreliella bavariensis) protein is tRNA (guanine-N(1)-)-methyltransferase.